A 156-amino-acid chain; its full sequence is 17.7 kDa class II heat shock protein (156 aa).

Positions 39 to 156 (DAKAMAATPA…KPKTIQVQVA (118 aa)) constitute a sHSP domain.

It belongs to the small heat shock protein (HSP20) family. As to quaternary structure, may form oligomeric structures.

Its subcellular location is the cytoplasm. The polypeptide is 17.7 kDa class II heat shock protein (HSP17.7) (Arabidopsis thaliana (Mouse-ear cress)).